The sequence spans 362 residues: Mitochondrial distribution and morphology protein 12 (362 aa).

Residues 1-361 (MSFDINWSQL…WPSWLCFDMS (361 aa)) enclose the SMP-LTD domain. Disordered stretches follow at residues 65–141 (DFYE…AATP) and 170–207 (TPSG…SKRG). 2 stretches are compositionally biased toward polar residues: residues 106–119 (VTLS…TQFA) and 170–187 (TPSG…MRTG). The segment covering 192–201 (PISNTPISSS) has biased composition (low complexity).

This sequence belongs to the MDM12 family. Component of the ER-mitochondria encounter structure (ERMES) or MDM complex, composed of MMM1, MDM10, MDM12 and MDM34. An MMM1 homodimer associates with one molecule of MDM12 on each side in a pairwise head-to-tail manner, and the SMP-LTD domains of MMM1 and MDM12 generate a continuous hydrophobic tunnel for phospholipid trafficking.

The protein localises to the mitochondrion outer membrane. It is found in the endoplasmic reticulum membrane. Functionally, component of the ERMES/MDM complex, which serves as a molecular tether to connect the endoplasmic reticulum (ER) and mitochondria. Components of this complex are involved in the control of mitochondrial shape and protein biogenesis, and function in nonvesicular lipid trafficking between the ER and mitochondria. MDM12 is required for the interaction of the ER-resident membrane protein MMM1 and the outer mitochondrial membrane-resident beta-barrel protein MDM10. The MDM12-MMM1 subcomplex functions in the major beta-barrel assembly pathway that is responsible for biogenesis of all mitochondrial outer membrane beta-barrel proteins, and acts in a late step after the SAM complex. The MDM10-MDM12-MMM1 subcomplex further acts in the TOM40-specific pathway after the action of the MDM12-MMM1 complex. Essential for establishing and maintaining the structure of mitochondria and maintenance of mtDNA nucleoids. This is Mitochondrial distribution and morphology protein 12 from Meyerozyma guilliermondii (strain ATCC 6260 / CBS 566 / DSM 6381 / JCM 1539 / NBRC 10279 / NRRL Y-324) (Yeast).